Here is a 660-residue protein sequence, read N- to C-terminus: E3 ubiquitin-protein ligase ORTHRUS 3 (660 aa).

Residues 12–63 form a PHD-type zinc finger; sequence EGVCMRCKSMPPPEESLTCGTCVTPWHVSCLLSPPETLSATLQWLCPDCSGE. Positions 107 to 129 are disordered; that stretch reads QLLSGKGVVDEDDEEEKKKTSKG. The segment at 141 to 197 adopts an RING-type 1 zinc-finger fold; it reads CSFCMQSLQKPVSVRVLFALALMLVWFLESTPCGHNACLKCFLKWMGQGHRSCGTCR. The YDG domain occupies 285-434; that stretch reads VRNQGLLVGE…CRFLFVRCDN (150 aa). The segment at 528–585 adopts an RING-type 2 zinc-finger fold; it reads CQICQKVMTNPVTTPCAHNFCKACLESKFAGTALVRERGSGGRKLRSQKSVMKCPCCP. Residues 593–622 are a coiled coil; sequence QNPQVNREVAEVIEKLKKQEEEENAKSLDE. Composition is skewed to basic and acidic residues over residues 610 to 621 and 637 to 646; these read KQEEEENAKSLD and QPKKRIKLDT. The disordered stretch occupies residues 610-660; that stretch reads KQEEEENAKSLDEGQCSGTSHEEEDDEQPKKRIKLDTDAEVSATVVESDMK.

The protein resides in the nucleus. The catalysed reaction is S-ubiquitinyl-[E2 ubiquitin-conjugating enzyme]-L-cysteine + [acceptor protein]-L-lysine = [E2 ubiquitin-conjugating enzyme]-L-cysteine + N(6)-ubiquitinyl-[acceptor protein]-L-lysine.. Its pathway is protein modification; protein ubiquitination. E3 ubiquitin-protein ligase. May participate in CpG methylation-dependent transcriptional regulation. The protein is E3 ubiquitin-protein ligase ORTHRUS 3 (ORTH3) of Arabidopsis thaliana (Mouse-ear cress).